Consider the following 109-residue polypeptide: Protein phosphatase 1 regulatory subunit 1C (109 aa).

Residues 25 to 109 (AEQIRKRRPT…TNEREEQRDH (85 aa)) are disordered. Residues 45–54 (NPPEIDDKRV) are compositionally biased toward basic and acidic residues. The span at 55-75 (PNTQGELQNASPKQRKQSVYT) shows a compositional bias: polar residues. Over residues 100–109 (TNEREEQRDH) the composition is skewed to basic and acidic residues.

Belongs to the protein phosphatase inhibitor 1 family.

It is found in the cytoplasm. May increase cell susceptibility to TNF-induced apoptosis. This is Protein phosphatase 1 regulatory subunit 1C (PPP1R1C) from Pongo abelii (Sumatran orangutan).